Here is a 123-residue protein sequence, read N- to C-terminus: UPF0382 membrane protein YwdK (123 aa).

A run of 4 helical transmembrane segments spans residues 3 to 23 (VFII…AFGA), 49 to 69 (ALGL…GSVT), 71 to 91 (AGWL…ILSV), and 96 to 116 (ILGA…IMIV).

The protein belongs to the UPF0382 family.

It is found in the cell membrane. In Bacillus subtilis (strain 168), this protein is UPF0382 membrane protein YwdK (ywdK).